The chain runs to 248 residues: tRNA1(Val) (adenine(37)-N6)-methyltransferase (248 aa).

Belongs to the methyltransferase superfamily. tRNA (adenine-N(6)-)-methyltransferase family.

Its subcellular location is the cytoplasm. The enzyme catalyses adenosine(37) in tRNA1(Val) + S-adenosyl-L-methionine = N(6)-methyladenosine(37) in tRNA1(Val) + S-adenosyl-L-homocysteine + H(+). Functionally, specifically methylates the adenine in position 37 of tRNA(1)(Val) (anticodon cmo5UAC). This Pectobacterium carotovorum subsp. carotovorum (strain PC1) protein is tRNA1(Val) (adenine(37)-N6)-methyltransferase.